The primary structure comprises 350 residues: Neuronal-specific septin-3 (350 aa).

The span at methionine 1–threonine 10 shows a compositional bias: basic and acidic residues. Residues methionine 1 to methionine 29 are disordered. Residues threonine 58–aspartate 331 enclose the Septin-type G domain. The tract at residues glycine 68–serine 75 is G1 motif. Glycine 68 to serine 75 contacts GTP. Serine 91 bears the Phosphoserine mark. Residue threonine 102 participates in GTP binding. A G3 motif region spans residues aspartate 125 to glycine 128. The interval alanine 207 to aspartate 210 is G4 motif. GTP is bound by residues lysine 208–glutamate 216, glycine 265, and arginine 280. The tract at residues arginine 328 to proline 350 is disordered.

Belongs to the TRAFAC class TrmE-Era-EngA-EngB-Septin-like GTPase superfamily. Septin GTPase family. Septins polymerize into heterooligomeric protein complexes that form filaments, and can associate with cellular membranes, actin filaments and microtubules. GTPase activity is required for filament formation. Post-translationally, phosphorylated by PKG on serine residues. Phosphorylated by PKG on Ser-91. Expressed in the brain including the cerebrum, hippocampus and cerebellum (at protein level).

It localises to the cytoplasm. It is found in the cytoskeleton. Its subcellular location is the synapse. Filament-forming cytoskeletal GTPase. May play a role in cytokinesis (Potential). In Mus musculus (Mouse), this protein is Neuronal-specific septin-3.